The sequence spans 246 residues: tRNA pseudouridine synthase A (246 aa).

Residue aspartate 52 is the Nucleophile of the active site. Substrate is bound at residue tyrosine 111.

It belongs to the tRNA pseudouridine synthase TruA family. In terms of assembly, homodimer.

The enzyme catalyses uridine(38/39/40) in tRNA = pseudouridine(38/39/40) in tRNA. Formation of pseudouridine at positions 38, 39 and 40 in the anticodon stem and loop of transfer RNAs. This chain is tRNA pseudouridine synthase A, found in Borreliella afzelii (strain PKo) (Borrelia afzelii).